The following is a 931-amino-acid chain: MNQSPAAFGPRRGGSPAVVAGAGARRNESQDYLLMDSELGDDAQPPLPAYGYYPCLRGTDSRLTHRRQTVLREKGRRLANRGPAYMFNDHSTSLSIEEERFLDAAEYGNIPVVRKMLEECLSLNVNCVDYMGQNALQLAVANEHLEITELLLKKENLSRVGDALLLAISKGYVRIVEAILSHPAFAEGKRLATSPSQSELQQDDFYAYDEDGTRFSHDVTPIILAAHCQEYEIVHTLLRKGARIERPHDYFCKCSECNQKQKHDSFSHSRSRINAYKGLASPAYLSLSSEDPVMTALELSNELAVLANIEKEFKNDYKKLSMQCKDFVVGLLDLCRNTEEVEAILNGDVEIHHSGGDHYRPNLSRLKLAIKYDVKKFVAHPNCQQQLLSIWYENLSGLRQQTMAVKFLVVLAVAVGLPFLALVYWFAPCSKMGKIMRGPFMKFVAHAASFTIFLGLLVMNAADRFEGTKILPNETSTDHAKQLFRMKTSCFSWMEMLIISWVIGMIWAECKEIWTQGPKEYLFELWNMLDFGMLAIFAASFIARFMAFWHASKAQSIIDANDTLKDLTKVTLGDNVKYYNLARIKWDPSDPQIISEGLYAIAVVLSFSRIAYILPANESFGPLQISLGRTVKDIFKFMVIFIMVFVAFMIGMFNLYSYYIGAKQNEAFTTVEESFKTLFWAIFGLSEVKSVVINYNHKFIENIGYVLYGVYNVTMVIVLLNMLIAMINSSFQEIEDDADVEWKFARAKLWFSYFEEGRTLPVPFNLVPSPKSLFYLLLRLKKWISELFQGHKKGFQEDAEMNKRNEGKKFGILGSHEDLSKLSLDRKQFAHSKQSSIRSSEDFQLNSFTNPPRQYQKIMKRLIKRYVLQAQIDKESDEVNEGELKEIKQDISSLRYELLEEKTQNSEDLAELIRKLGEKLSMEPNQEESNR.

The disordered stretch occupies residues 1 to 24 (MNQSPAAFGPRRGGSPAVVAGAGA). Over 1–406 (MNQSPAAFGP…GLRQQTMAVK (406 aa)) the chain is Cytoplasmic. Positions 13–24 (GGSPAVVAGAGA) are enriched in low complexity. ANK repeat units lie at residues 131–160 (MGQNALQLAVANEHLEITELLLKKENLSRV), 162–188 (DALLLAISKGYVRIVEAILSHPAFAEG), and 217–246 (HDVTPIILAAHCQEYEIVHTLLRKGARIER). Residues 407–427 (FLVVLAVAVGLPFLALVYWFA) traverse the membrane as a helical segment. Topologically, residues 428–438 (PCSKMGKIMRG) are extracellular. Residues 439–459 (PFMKFVAHAASFTIFLGLLVM) form a helical membrane-spanning segment. Topologically, residues 460 to 487 (NAADRFEGTKILPNETSTDHAKQLFRMK) are cytoplasmic. The helical transmembrane segment at 488 to 508 (TSCFSWMEMLIISWVIGMIWA) threads the bilayer. Topologically, residues 509–521 (ECKEIWTQGPKEY) are extracellular. The helical transmembrane segment at 522–542 (LFELWNMLDFGMLAIFAASFI) threads the bilayer. Topologically, residues 543–592 (ARFMAFWHASKAQSIIDANDTLKDLTKVTLGDNVKYYNLARIKWDPSDPQ) are cytoplasmic. Residues 593-613 (IISEGLYAIAVVLSFSRIAYI) traverse the membrane as a helical segment. The Extracellular portion of the chain corresponds to 614–636 (LPANESFGPLQISLGRTVKDIFK). N-linked (GlcNAc...) asparagine glycosylation is present at asparagine 617. Residues 618 to 647 (ESFGPLQISLGRTVKDIFKFMVIFIMVFVA) form an ANK 4 repeat. A helical transmembrane segment spans residues 637–657 (FMVIFIMVFVAFMIGMFNLYS). Over 658–674 (YYIGAKQNEAFTTVEES) the chain is Cytoplasmic. A helical transmembrane segment spans residues 675–695 (FKTLFWAIFGLSEVKSVVINY). The Extracellular segment spans residues 696–706 (NHKFIENIGYV). Residues 707-727 (LYGVYNVTMVIVLLNMLIAMI) traverse the membrane as a helical segment. The Cytoplasmic segment spans residues 728–931 (NSSFQEIEDD…MEPNQEESNR (204 aa)). A Phosphoserine modification is found at serine 815.

This sequence belongs to the transient receptor (TC 1.A.4) family. STrpC subfamily. TRPC6 sub-subfamily. In terms of assembly, homodimer; forms channel complex. Interacts with MX1 and RNF24. Post-translationally, phosphorylated by FYN, leading to an increase of TRPC6 channel activity.

The protein resides in the cell membrane. It carries out the reaction Ca(2+)(in) = Ca(2+)(out). Its function is as follows. Thought to form a receptor-activated non-selective calcium permeant cation channel. Probably is operated by a phosphatidylinositol second messenger system activated by receptor tyrosine kinases or G-protein coupled receptors. Activated by diacylglycerol (DAG) in a membrane-delimited fashion, independently of protein kinase C. Seems not to be activated by intracellular calcium store depletion. This Bos taurus (Bovine) protein is Short transient receptor potential channel 6.